We begin with the raw amino-acid sequence, 184 residues long: Photosystem I assembly protein Ycf4 (184 aa).

2 consecutive transmembrane segments (helical) span residues 22–42 and 64–84; these read LCWA…GFSS and IVMC…WCTI.

This sequence belongs to the Ycf4 family.

It localises to the plastid. It is found in the chloroplast thylakoid membrane. Its function is as follows. Seems to be required for the assembly of the photosystem I complex. In Angiopteris evecta (Mule's foot fern), this protein is Photosystem I assembly protein Ycf4.